Consider the following 353-residue polypeptide: Transcription factor MafA (353 aa).

Phosphoserine is present on serine 14. Lysine 32 is covalently cross-linked (Glycyl lysine isopeptide (Lys-Gly) (interchain with G-Cter in SUMO2)). Disordered stretches follow at residues 40–108 and 177–219; these read RFCH…GGTS and ADDM…GAGH. Residues 46 to 73 show a composition bias toward low complexity; it reads PPGSLSSTPLSTPCSSVPSSPSFCAPSP. Phosphoserine is present on serine 49. 2 positions are modified to phosphothreonine: threonine 53 and threonine 57. Serine 61 and serine 65 each carry phosphoserine. A compositionally biased stretch (gly residues) spans 74 to 93; it reads GTGGGGGAGGGGGSSQAGGA. A compositionally biased stretch (basic residues) spans 183–210; the sequence is GHHHGAHHAAHHHHAAHHHHHHHHHHGG. Residues 254–279 are basic motif; the sequence is RLKQKRRTLKNRGYAQSCRFKRVQQR. A bZIP domain is found at 254-317; sequence RLKQKRRTLK…DLYKEKYEKL (64 aa). Residues 282-303 are leucine-zipper; that stretch reads LESEKCQLQSQVEQLKLEVGRL. Residues 315–353 form a disordered region; sequence EKLAGRGGPGSAGGAGFPREPSPPQAGPGGAKGTADFFL. Gly residues predominate over residues 319–330; the sequence is GRGGPGSAGGAG.

This sequence belongs to the bZIP family. Maf subfamily. In terms of assembly, forms homodimers or heterodimers. Monomers and dimers are able to bind DNA, but the off-rate is faster for monomers. Interacts with NEUROD1 and PDX1. May interact with MAFB, FOS, JUN and PCAF. Post-translationally, ubiquitinated, leading to its degradation by the proteasome. In terms of processing, phosphorylated at tyrosines. In terms of tissue distribution, expressed in the islets of Langerhans (at protein level).

The protein resides in the nucleus. Transcription factor that activates insulin gene expression. Acts synergistically with NEUROD1/BETA2 and PDX1. Binds the insulin enhancer C1/RIPE3b element. Binds to consensus TRE-type MARE 5'-TGCTGACTCAGCA-3' DNA sequence. The polypeptide is Transcription factor MafA (MAFA) (Homo sapiens (Human)).